The chain runs to 319 residues: tRNA uridine(34) hydroxylase (319 aa).

Positions 123–221 (GDPDVVVIDT…YLETIPPEQS (99 aa)) constitute a Rhodanese domain. C181 acts as the Cysteine persulfide intermediate in catalysis. Positions 298–319 (ARQQVHIGASPEPKAMPATAGR) are disordered.

It belongs to the TrhO family.

It carries out the reaction uridine(34) in tRNA + AH2 + O2 = 5-hydroxyuridine(34) in tRNA + A + H2O. Its function is as follows. Catalyzes oxygen-dependent 5-hydroxyuridine (ho5U) modification at position 34 in tRNAs. This is tRNA uridine(34) hydroxylase from Albidiferax ferrireducens (strain ATCC BAA-621 / DSM 15236 / T118) (Rhodoferax ferrireducens).